The following is a 357-amino-acid chain: Inositol-tetrakisphosphate 1-kinase 3 (357 aa).

Positions 56 and 98 each coordinate 1D-myo-inositol 1,3,4-trisphosphate. The ATP site is built by Arg133 and Lys183. Residues His190 and Lys222 each coordinate 1D-myo-inositol 1,3,4-trisphosphate. ATP is bound by residues 211–222, Ser237, and Ser262; that span reads QEFVNHGGVLFK. Residues Asp302, Asp317, and Asn319 each contribute to the Mg(2+) site. Residue Asn319 coordinates 1D-myo-inositol 1,3,4-trisphosphate.

The protein belongs to the ITPK1 family. As to quaternary structure, monomer. The cofactor is Mg(2+).

It catalyses the reaction 1D-myo-inositol 3,4,5,6-tetrakisphosphate + ATP = 1D-myo-inositol 1,3,4,5,6-pentakisphosphate + ADP + H(+). The enzyme catalyses 1D-myo-inositol 1,3,4-trisphosphate + ATP = 1D-myo-inositol 1,3,4,5-tetrakisphosphate + ADP + H(+). The catalysed reaction is 1D-myo-inositol 1,3,4-trisphosphate + ATP = 1D-myo-inositol 1,3,4,6-tetrakisphosphate + ADP + H(+). Its function is as follows. Kinase that can phosphorylate various inositol polyphosphate such as Ins(3,4,5,6)P4 or Ins(1,3,4)P3 and participates in phytic acid biosynthesis in developing seeds. Phytic acid is the primary storage form of phosphorus in cereal grains and other plant seeds. This chain is Inositol-tetrakisphosphate 1-kinase 3 (ITPK3), found in Oryza sativa subsp. indica (Rice).